The following is a 145-amino-acid chain: 3-hydroxyacyl-[acyl-carrier-protein] dehydratase FabZ (145 aa).

His-51 is an active-site residue.

Belongs to the thioester dehydratase family. FabZ subfamily.

The protein localises to the cytoplasm. It catalyses the reaction a (3R)-hydroxyacyl-[ACP] = a (2E)-enoyl-[ACP] + H2O. Its function is as follows. Involved in unsaturated fatty acids biosynthesis. Catalyzes the dehydration of short chain beta-hydroxyacyl-ACPs and long chain saturated and unsaturated beta-hydroxyacyl-ACPs. This chain is 3-hydroxyacyl-[acyl-carrier-protein] dehydratase FabZ, found in Macrococcus caseolyticus (strain JCSC5402) (Macrococcoides caseolyticum).